The chain runs to 1103 residues: Platelet-derived growth factor receptor beta (1103 aa).

The first 31 residues, 1–31 (MQVPGTMPAPVLKGQALWLPLLLMLSPQASG), serve as a signal peptide directing secretion. Ig-like C2-type domains follow at residues 33–120 (LVIT…YIFV), 129–210 (PVDP…YSLQ), 214–309 (INVS…INVT), 331–403 (HRSR…HEDA), and 416–524 (PVRV…VTVV). At 33-532 (LVITPPGPEL…VVPHSLPFKV (500 aa)) the chain is on the extracellular side. 2 N-linked (GlcNAc...) asparagine glycosylation sites follow: Asn45 and Asn89. 2 cysteine pairs are disulfide-bonded: Cys54/Cys100 and Cys149/Cys190. Residues Asn215 and Asn230 are each glycosylated (N-linked (GlcNAc...) asparagine). Cys235 and Cys291 form a disulfide bridge. Residues Asn292, Asn307, Asn354, Asn371, Asn468, and Asn479 are each glycosylated (N-linked (GlcNAc...) asparagine). Cys436 and Cys508 are oxidised to a cystine. A helical transmembrane segment spans residues 533 to 553 (VVISAILALVVLTIISLIILI). Residues 554-1103 (MLWQKKPRYE…PRAEAEDSFL (550 aa)) are Cytoplasmic-facing. Phosphotyrosine; by autocatalysis occurs at positions 562, 579, and 581. Residues 600–962 (LVLGRTLGSG…QLVLLLERLL (363 aa)) enclose the Protein kinase domain. ATP-binding positions include 606-614 (LGSGAFGQV) and Lys634. Position 686 is a phosphotyrosine; by ABL1 and ABL2 (Tyr686). Phosphotyrosine; by autocatalysis occurs at positions 716, 740, 751, 763, 771, 775, and 778. The active-site Proton acceptor is the Asp826. The residue at position 857 (Tyr857) is a Phosphotyrosine; by autocatalysis. 2 positions are modified to phosphotyrosine; by ABL1 and ABL2: Tyr934 and Tyr970. 2 positions are modified to phosphotyrosine; by autocatalysis: Tyr1009 and Tyr1021. The disordered stretch occupies residues 1017–1103 (GDNDYIIPLP…PRAEAEDSFL (87 aa)). Positions 1039-1059 (SSPSLASSTLNEVNTSSTISC) are enriched in polar residues. Residues 1065-1075 (PQEEPEPEPEP) show a composition bias toward acidic residues. The span at 1076–1086 (QPEPQVVPEPP) shows a compositional bias: pro residues.

The protein belongs to the protein kinase superfamily. Tyr protein kinase family. CSF-1/PDGF receptor subfamily. As to quaternary structure, interacts with homodimeric PDGFB and PDGFD, and with heterodimers formed by PDGFA and PDGFB. May also interact with homodimeric PDGFC. Monomer in the absence of bound ligand. Interaction with homodimeric PDGFB, heterodimers formed by PDGFA and PDGFB or homodimeric PDGFD, leads to receptor dimerization, where both PDGFRA homodimers and heterodimers with PDGFRB are observed. Interacts with SH2B2/APS. Interacts directly (tyrosine phosphorylated) with SHB. Interacts (tyrosine phosphorylated) with PIK3R1 and RASA1. Interacts (tyrosine phosphorylated) with CBL. Interacts (tyrosine phosphorylated) with SRC and SRC family kinases. Interacts (tyrosine phosphorylated) with PIK3C2B, maybe indirectly. Interacts (tyrosine phosphorylated) with SHC1, GRB7, GRB10 and NCK1. Interaction with GRB2 is mediated by SHC1. Interacts (via C-terminus) with NHERF1. Post-translationally, N-glycosylated. Ubiquitinated. After autophosphorylation, the receptor is polyubiquitinated, leading to its degradation. In terms of processing, autophosphorylated on tyrosine residues upon ligand binding. Autophosphorylation occurs in trans, i.e. one subunit of the dimeric receptor phosphorylates tyrosine residues on the other subunit. Phosphorylation at Tyr-579, and to a lesser degree, Tyr-581 is important for interaction with SRC. Phosphorylation at Tyr-716 is important for interaction with GRB2. Phosphorylation at Tyr-740 and Tyr-751 is important for interaction with PIK3R1. Phosphorylation at Tyr-751 is important for interaction with NCK1. Phosphorylation at Tyr-771 and Tyr-857 is important for interaction with RASA1/GAP. Phosphorylation at Tyr-857 is important for efficient phosphorylation of PLCG1 and PTPN11, resulting in increased phosphorylation of AKT1, MAPK1/ERK2 and/or MAPK3/ERK1, PDCD6IP/ALIX and STAM, and in increased cell proliferation. Phosphorylation at Tyr-1009 is important for interaction with PTPN11. Phosphorylation at Tyr-1009 and Tyr-1021 is important for interaction with PLCG1. Dephosphorylated by PTPRJ at Tyr-751, Tyr-857, Tyr-1009 and Tyr-1021. Dephosphorylated by PTPN2 at Tyr-579 and Tyr-1021.

It localises to the cell membrane. The protein localises to the cytoplasmic vesicle. It is found in the lysosome lumen. The catalysed reaction is L-tyrosyl-[protein] + ATP = O-phospho-L-tyrosyl-[protein] + ADP + H(+). Present in an inactive conformation in the absence of bound ligand. Binding of PDGFB and/or PDGFD leads to dimerization and activation by autophosphorylation on tyrosine residues. Functionally, tyrosine-protein kinase that acts as a cell-surface receptor for homodimeric PDGFB and PDGFD and for heterodimers formed by PDGFA and PDGFB, and plays an essential role in the regulation of embryonic development, cell proliferation, survival, differentiation, chemotaxis and migration. Plays an essential role in blood vessel development by promoting proliferation, migration and recruitment of pericytes and smooth muscle cells to endothelial cells. Plays a role in the migration of vascular smooth muscle cells and the formation of neointima at vascular injury sites. Required for normal development of the cardiovascular system. Required for normal recruitment of pericytes (mesangial cells) in the kidney glomerulus, and for normal formation of a branched network of capillaries in kidney glomeruli. Promotes rearrangement of the actin cytoskeleton and the formation of membrane ruffles. Binding of its cognate ligands - homodimeric PDGFB, heterodimers formed by PDGFA and PDGFB or homodimeric PDGFD -leads to the activation of several signaling cascades; the response depends on the nature of the bound ligand and is modulated by the formation of heterodimers between PDGFRA and PDGFRB. Phosphorylates PLCG1, PIK3R1, PTPN11, RASA1/GAP, CBL, SHC1 and NCK1. Activation of PLCG1 leads to the production of the cellular signaling molecules diacylglycerol and inositol 1,4,5-trisphosphate, mobilization of cytosolic Ca(2+) and the activation of protein kinase C. Phosphorylation of PIK3R1, the regulatory subunit of phosphatidylinositol 3-kinase, leads to the activation of the AKT1 signaling pathway. Phosphorylation of SHC1, or of the C-terminus of PTPN11, creates a binding site for GRB2, resulting in the activation of HRAS, RAF1 and down-stream MAP kinases, including MAPK1/ERK2 and/or MAPK3/ERK1. Promotes phosphorylation and activation of SRC family kinases. Promotes phosphorylation of PDCD6IP/ALIX and STAM. Receptor signaling is down-regulated by protein phosphatases that dephosphorylate the receptor and its down-stream effectors, and by rapid internalization of the activated receptor. The sequence is that of Platelet-derived growth factor receptor beta (PDGFRB) from Canis lupus familiaris (Dog).